Here is a 361-residue protein sequence, read N- to C-terminus: Probable dual-specificity RNA methyltransferase RlmN (361 aa).

The Proton acceptor role is filled by Glu-91. Positions 97 to 329 (QHYGLSVCVT…KKKGGNCVVR (233 aa)) constitute a Radical SAM core domain. Cys-104 and Cys-340 are oxidised to a cystine. Positions 111, 115, and 118 each coordinate [4Fe-4S] cluster. S-adenosyl-L-methionine contacts are provided by residues 163–164 (GE), Ser-195, 218–220 (SLH), and Asn-296. The S-methylcysteine intermediate role is filled by Cys-340.

Belongs to the radical SAM superfamily. RlmN family. The cofactor is [4Fe-4S] cluster.

It is found in the cytoplasm. The catalysed reaction is adenosine(2503) in 23S rRNA + 2 reduced [2Fe-2S]-[ferredoxin] + 2 S-adenosyl-L-methionine = 2-methyladenosine(2503) in 23S rRNA + 5'-deoxyadenosine + L-methionine + 2 oxidized [2Fe-2S]-[ferredoxin] + S-adenosyl-L-homocysteine. It catalyses the reaction adenosine(37) in tRNA + 2 reduced [2Fe-2S]-[ferredoxin] + 2 S-adenosyl-L-methionine = 2-methyladenosine(37) in tRNA + 5'-deoxyadenosine + L-methionine + 2 oxidized [2Fe-2S]-[ferredoxin] + S-adenosyl-L-homocysteine. Specifically methylates position 2 of adenine 2503 in 23S rRNA and position 2 of adenine 37 in tRNAs. The protein is Probable dual-specificity RNA methyltransferase RlmN of Streptococcus pneumoniae (strain P1031).